A 967-amino-acid chain; its full sequence is uncharacterized protein (967 aa).

A signal peptide spans 1–29; sequence MKKKLKSVLIWFLIFTFNLSLGSFREVFA. 2 consecutive BIG2 domains span residues 38–107 and 133–190; these read TAIT…QDGS and LPVG…VNDG.

This is an uncharacterized protein from Clostridium acetobutylicum (strain ATCC 824 / DSM 792 / JCM 1419 / IAM 19013 / LMG 5710 / NBRC 13948 / NRRL B-527 / VKM B-1787 / 2291 / W).